A 541-amino-acid chain; its full sequence is Phenazine N-monooxygenase PhzNO1 (541 aa).

Residues Asp-39, 47 to 50 (TWYW), 59 to 60 (DT), Tyr-65, and Ile-112 each bind FAD. Residue 57–59 (RAD) coordinates NADP(+). Residues 186–192 (TGSTGVQ), 209–210 (RS), and Trp-492 each bind NADP(+).

This sequence belongs to the FAD-binding monooxygenase family. FAD serves as cofactor.

It catalyses the reaction 1,6-dihydroxyphenazine + NADPH + O2 = 1,6-dihydroxyphenazine N(5)-oxide + NADP(+) + H2O. The enzyme catalyses 1,6-dihydroxyphenazine N(5)-oxide + NADPH + O2 = 1,6-dihydroxyphenazine N(5),N(10)-dioxide + NADP(+) + H2O. It carries out the reaction 1-hydroxy-6-methoxyphenazine + NADPH + O2 = 1-hydroxy-6-methoxyphenazine N(10)-oxide + NADP(+) + H2O. The catalysed reaction is quinolin-8-ol + NADPH + O2 = 8-hydroxyquinoline N-oxide + NADP(+) + H2O. Its function is as follows. Involved in the biosynthesis of phenazine natural products including myxin, an N(5),N(10)-dioxide phenazine antiobiotic, which has antimicrobial activity. Catalyzes the aromatic N-oxidations of phenazines, such as 1,6-dihydroxyphenazine (DHP), 1,6-dihydroxyphenazine N(5)-oxide (DHPO) and 1-hydroxy-6-methoxyphenazine to produce DHPO, iodinin (1,6-dihydroxyphenazine N(5),N(10)-dioxide) and 1-hydroxy-6-methoxyphenazine N(10)-oxide, respectively. Also catalyzes the N-oxidation of 8-hydroxyquinoline, but not 6-hydroxyquinoline (6-HQ), quinoline, quinoxaline, quinine and 2-phenylpyridine. This is Phenazine N-monooxygenase PhzNO1 from Lysobacter antibioticus.